A 203-amino-acid chain; its full sequence is Ras-related protein Rab-7L1 (203 aa).

6 residues coordinate GTP: S33, K34, H35, Y36, K37, and T39. The short motif at 36–44 (YKSTVGVDF) is the Effector region element. T71 is subject to Phosphothreonine; by LRRK2. Position 72 is a phosphoserine; by LRRK2 (S72). Positions 126, 156, and 157 each coordinate GTP. Residues C202 and C203 are each lipidated (S-geranylgeranyl cysteine).

This sequence belongs to the small GTPase superfamily. Rab family. As to quaternary structure, interacts with LRRK2 (via the N-terminus); this interaction is direct and stimulates kinase activity. In terms of processing, in case of Salmonella enterica serovar Typhimurium (S.typhimurium) infection, is proteolytically cleaved between Gly-41 and Val-42 by the GtgE viral protease encoded on the Gifsy-2 lysogen bacteriophage, which therefore prevents the recruitment of RAB29 to S.typhimurium-containing vacuoles. In contrast, no proteolytically cleavage is detected in S.typhi-infected cells. As to expression, ubiquitous.

The protein localises to the cell membrane. It is found in the cytoplasm. The protein resides in the perinuclear region. It localises to the golgi apparatus. Its subcellular location is the golgi apparatus membrane. The protein localises to the trans-Golgi network. It is found in the vacuole. The protein resides in the cytoskeleton. The small GTPases Rab are key regulators in vesicle trafficking. Essential for maintaining the integrity of the endosome-trans-Golgi network structure. Together with LRRK2, plays a role in the retrograde trafficking pathway for recycling proteins, such as mannose 6 phosphate receptor (M6PR), between lysosomes and the Golgi apparatus in a retromer-dependent manner. Recruits LRRK2 to the Golgi complex and stimulates LRRK2 kinase activity. Stimulates phosphorylation of RAB10 'Thr-73' by LRRK2. Regulates neuronal process morphology in the intact central nervous system (CNS). May play a role in the formation of typhoid toxin transport intermediates during Salmonella enterica serovar Typhi (S.typhi) epithelial cell infection. This is Ras-related protein Rab-7L1 (RAB29) from Homo sapiens (Human).